A 450-amino-acid chain; its full sequence is 23S rRNA (uracil(1939)-C(5))-methyltransferase RlmD (450 aa).

The tract at residues M1–P22 is disordered. Residues A20 to R78 form the TRAM domain. C91, C97, C100, and C179 together coordinate [4Fe-4S] cluster. 6 residues coordinate S-adenosyl-L-methionine: Q283, F312, N317, E333, D360, and D381. C407 functions as the Nucleophile in the catalytic mechanism.

Belongs to the class I-like SAM-binding methyltransferase superfamily. RNA M5U methyltransferase family. RlmD subfamily.

The catalysed reaction is uridine(1939) in 23S rRNA + S-adenosyl-L-methionine = 5-methyluridine(1939) in 23S rRNA + S-adenosyl-L-homocysteine + H(+). Catalyzes the formation of 5-methyl-uridine at position 1939 (m5U1939) in 23S rRNA. The polypeptide is 23S rRNA (uracil(1939)-C(5))-methyltransferase RlmD (Pseudomonas aeruginosa (strain UCBPP-PA14)).